Here is a 174-residue protein sequence, read N- to C-terminus: Translationally-controlled tumor protein homolog 1 (174 aa).

In terms of domain architecture, TCTP spans Met-1 to Tyr-174.

Belongs to the TCTP family.

Its subcellular location is the cytoplasm. Functionally, involved in calcium binding and microtubule stabilization. This Dictyostelium discoideum (Social amoeba) protein is Translationally-controlled tumor protein homolog 1.